The chain runs to 344 residues: Lipase chaperone (344 aa).

A helical membrane pass occupies residues 14-34; that stretch reads VAVYGAVGLAAIAGVAIWSGA.

This sequence belongs to the lipase chaperone family.

The protein resides in the cell inner membrane. Functionally, may be involved in the folding of the extracellular lipase during its passage through the periplasm. This Burkholderia ambifaria (strain MC40-6) protein is Lipase chaperone.